Reading from the N-terminus, the 484-residue chain is MTITAPPKDEIISKFPGSEPLLNFYNELSDAEKSKLFHQISTLNLSEAHQWFIDSADQRAPSTAEDLKPVLDSQHFVQAELHQVILDGLWNKGMDAIGRGEVCAIVLAGGQATRLGSSQPKGTIPLGINASFGDSLLGIQAAKIALLQALAGEREHQNPGKIHWAVMTSPGTEEATREHVKKLAAHHGFDFDEQITIFSQDEIAAYDEQGNFLLGTKGSVVAAPNGNGGLYSAISAHLPRLRAKGIKYFHVYCVDNILCKVADPHFIGFAISNEADVATKCVPKQKGELVGSVCLDRGLPRVVEYSELGAELAEQKTPDGKYLFGAGSIANHFFTMDFMDRVCSPSSRLPYHRAHKKISYVNEQGTIVKPEKPNGIKLEQFIFDVFELSKRFFIWEVARNEEFSPLKNAQSVGTDCLSTCQRDLSNVNKLWLERVQAKVTATEKPIYLKTIVSYNGENLQELRHREISDSALESDHSINKFFVV.

A Substrate binding motif is present at residues 107–110; that stretch reads LAGG. UTP is bound by residues 107–110, lysine 121, glutamine 200, and glycine 226; that span reads LAGG. Residue asparagine 227 coordinates substrate. Aspartate 255 serves as a coordination point for UTP. The Substrate binding signature appears at 304-305; it reads EY. Position 377 (lysine 377) interacts with UTP. Lysine 407 is a substrate binding site.

It belongs to the UDPGP type 1 family.

It localises to the cytoplasm. The catalysed reaction is N-acetyl-alpha-D-glucosamine 1-phosphate + UTP + H(+) = UDP-N-acetyl-alpha-D-glucosamine + diphosphate. The protein operates within nucleotide-sugar biosynthesis; UDP-N-acetyl-alpha-D-glucosamine biosynthesis; UDP-N-acetyl-alpha-D-glucosamine from N-acetyl-alpha-D-glucosamine 1-phosphate: step 1/1. This chain is Probable UDP-N-acetylglucosamine pyrophosphorylase, found in Caenorhabditis elegans.